A 241-amino-acid polypeptide reads, in one-letter code: Ubiquinone biosynthesis O-methyltransferase (241 aa).

4 residues coordinate S-adenosyl-L-methionine: R46, G66, D87, and M131.

It belongs to the methyltransferase superfamily. UbiG/COQ3 family.

The enzyme catalyses a 3-demethylubiquinol + S-adenosyl-L-methionine = a ubiquinol + S-adenosyl-L-homocysteine + H(+). The catalysed reaction is a 3-(all-trans-polyprenyl)benzene-1,2-diol + S-adenosyl-L-methionine = a 2-methoxy-6-(all-trans-polyprenyl)phenol + S-adenosyl-L-homocysteine + H(+). It participates in cofactor biosynthesis; ubiquinone biosynthesis. O-methyltransferase that catalyzes the 2 O-methylation steps in the ubiquinone biosynthetic pathway. The protein is Ubiquinone biosynthesis O-methyltransferase of Bordetella bronchiseptica (strain ATCC BAA-588 / NCTC 13252 / RB50) (Alcaligenes bronchisepticus).